Here is a 40-residue protein sequence, read N- to C-terminus: Photosystem II reaction center protein J (40 aa).

A helical membrane pass occupies residues 8 to 28 (IPLWLIGTVTGIIVIGLLGVF).

This sequence belongs to the PsbJ family. As to quaternary structure, PSII is composed of 1 copy each of membrane proteins PsbA, PsbB, PsbC, PsbD, PsbE, PsbF, PsbH, PsbI, PsbJ, PsbK, PsbL, PsbM, PsbT, PsbX, PsbY, PsbZ, Psb30/Ycf12, at least 3 peripheral proteins of the oxygen-evolving complex and a large number of cofactors. It forms dimeric complexes.

The protein resides in the plastid. The protein localises to the chloroplast thylakoid membrane. Functionally, one of the components of the core complex of photosystem II (PSII). PSII is a light-driven water:plastoquinone oxidoreductase that uses light energy to abstract electrons from H(2)O, generating O(2) and a proton gradient subsequently used for ATP formation. It consists of a core antenna complex that captures photons, and an electron transfer chain that converts photonic excitation into a charge separation. This Pinus thunbergii (Japanese black pine) protein is Photosystem II reaction center protein J.